Here is a 61-residue protein sequence, read N- to C-terminus: Photosystem II reaction center protein K (61 aa).

Residues methionine 1 to glycine 24 constitute a propeptide that is removed on maturation. The helical transmembrane segment at methionine 40–phenylalanine 60 threads the bilayer.

Belongs to the PsbK family. PSII is composed of 1 copy each of membrane proteins PsbA, PsbB, PsbC, PsbD, PsbE, PsbF, PsbH, PsbI, PsbJ, PsbK, PsbL, PsbM, PsbT, PsbX, PsbY, PsbZ, Psb30/Ycf12, at least 3 peripheral proteins of the oxygen-evolving complex and a large number of cofactors. It forms dimeric complexes.

It localises to the plastid. Its subcellular location is the chloroplast thylakoid membrane. Functionally, one of the components of the core complex of photosystem II (PSII). PSII is a light-driven water:plastoquinone oxidoreductase that uses light energy to abstract electrons from H(2)O, generating O(2) and a proton gradient subsequently used for ATP formation. It consists of a core antenna complex that captures photons, and an electron transfer chain that converts photonic excitation into a charge separation. The sequence is that of Photosystem II reaction center protein K from Jasminum nudiflorum (Winter jasmine).